We begin with the raw amino-acid sequence, 219 residues long: Aspartic protease inhibitor 10 (219 aa).

Positions 1 to 23 are cleaved as a signal peptide; the sequence is MMKCLFLLCLCLVPIVVFSSTFT. A propeptide spanning residues 24-32 is cleaved from the precursor; it reads SQNLIDLPS. A Vacuolar targeting signal motif is present at residues 26 to 31; that stretch reads NLIDLP. N-linked (GlcNAc...) asparagine glycosylation is present at asparagine 51. Disulfide bonds link cysteine 80/cysteine 125 and cysteine 173/cysteine 184.

It belongs to the protease inhibitor I3 (leguminous Kunitz-type inhibitor) family. In terms of tissue distribution, in tubers and green buds of untreated plants. After abscisic acid treatment or mechanical wounding is mostly accumulated in leaves, to a lesser extent in stems, but not in roots.

Functionally, inhibitor of cathepsin D (aspartic protease) and trypsin (serine protease). Protects the plant by inhibiting proteases of invading organisms. The protein is Aspartic protease inhibitor 10 (CDI) of Solanum tuberosum (Potato).